Consider the following 491-residue polypeptide: 3-octaprenyl-4-hydroxybenzoate carboxy-lyase (491 aa).

A Mn(2+)-binding site is contributed by Asn-176. Residues 179–181 (IYR), 193–195 (RWL), and 198–199 (RG) each bind prenylated FMN. Mn(2+) is bound at residue Glu-242. Asp-291 acts as the Proton donor in catalysis.

It belongs to the UbiD family. Homohexamer. It depends on prenylated FMN as a cofactor. Mn(2+) is required as a cofactor.

Its subcellular location is the cell membrane. The enzyme catalyses a 4-hydroxy-3-(all-trans-polyprenyl)benzoate + H(+) = a 2-(all-trans-polyprenyl)phenol + CO2. It participates in cofactor biosynthesis; ubiquinone biosynthesis. Functionally, catalyzes the decarboxylation of 3-octaprenyl-4-hydroxy benzoate to 2-octaprenylphenol, an intermediate step in ubiquinone biosynthesis. This Chromobacterium violaceum (strain ATCC 12472 / DSM 30191 / JCM 1249 / CCUG 213 / NBRC 12614 / NCIMB 9131 / NCTC 9757 / MK) protein is 3-octaprenyl-4-hydroxybenzoate carboxy-lyase.